The primary structure comprises 504 residues: Galactan beta-1,4-galactosyltransferase GALS3 (504 aa).

A helical membrane pass occupies residues 30–50; that stretch reads LTFMALLVLCTLATLLPFIPS. In terms of domain architecture, GT92 spans 242–456; that stretch reads DYLYCGSSLY…YHGSISQRRE (215 aa).

It belongs to the glycosyltransferase 92 family. As to expression, expressed in root caps, mature leaves, top of the stems and seeds.

It localises to the golgi apparatus membrane. In terms of biological role, involved in the biosynthesis of beta-1,4-galactan. Beta-1,4-galactans are abundant polysaccharides in plant cell walls and are found as side-chain of rhamnogalacturonan I, which is a major component of pectin. In Arabidopsis thaliana (Mouse-ear cress), this protein is Galactan beta-1,4-galactosyltransferase GALS3.